A 551-amino-acid chain; its full sequence is Palmdelphin (551 aa).

Met1 carries the post-translational modification N-acetylmethionine. Positions 2–106 (EEAELVKERL…LQISTNEEAI (105 aa)) form a coiled coil. Residue Lys125 forms a Glycyl lysine isopeptide (Lys-Gly) (interchain with G-Cter in SUMO2) linkage. Position 135 is a phosphoserine (Ser135). Residue Lys179 forms a Glycyl lysine isopeptide (Lys-Gly) (interchain with G-Cter in SUMO1); alternate linkage. Residue Lys179 forms a Glycyl lysine isopeptide (Lys-Gly) (interchain with G-Cter in SUMO2); alternate linkage. The segment covering 247–259 (SERNSKSPTEYHD) has biased composition (basic and acidic residues). Disordered regions lie at residues 247 to 393 (SERN…EDEE) and 450 to 529 (EEEE…IAGD). Phosphothreonine is present on Thr271. Phosphoserine is present on residues Ser321, Ser370, Ser384, and Ser385. The segment covering 484–495 (KRAEVNPHENTN) has biased composition (basic and acidic residues). 3 positions are modified to phosphoserine: Ser498, Ser515, and Ser520.

It belongs to the paralemmin family. Interacts with GLUL. Cell projection, dendrite. Cell projection, dendritic spine. Phosphorylated.

Its subcellular location is the cytoplasm. It localises to the cell projection. The protein resides in the dendrite. It is found in the dendritic spine. The protein is Palmdelphin (PALMD) of Sus scrofa (Pig).